Consider the following 593-residue polypeptide: Translation initiation factor IF-2 (593 aa).

The 170-residue stretch at 101 to 270 (LRPPVVTIMG…LLIAELEDLR (170 aa)) folds into the tr-type G domain. The tract at residues 110–117 (GHVDHGKT) is G1. 110 to 117 (GHVDHGKT) contributes to the GTP binding site. The G2 stretch occupies residues 135–139 (GITQH). The G3 stretch occupies residues 156-159 (DTPG). Residues 156–160 (DTPGH) and 210–213 (NKMD) contribute to the GTP site. The G4 stretch occupies residues 210–213 (NKMD). The G5 stretch occupies residues 246-248 (SAR).

The protein belongs to the TRAFAC class translation factor GTPase superfamily. Classic translation factor GTPase family. IF-2 subfamily.

It localises to the cytoplasm. Its function is as follows. One of the essential components for the initiation of protein synthesis. Protects formylmethionyl-tRNA from spontaneous hydrolysis and promotes its binding to the 30S ribosomal subunits. Also involved in the hydrolysis of GTP during the formation of the 70S ribosomal complex. The chain is Translation initiation factor IF-2 from Dehalococcoides mccartyi (strain CBDB1).